The sequence spans 1080 residues: MSSQSHPDGLSGRDQPVELLNPPRVNHMPSSVDVSTALPLQVAPTSVPMDLRLDHQFPMPVTEPTLREQQLQQELLALKQKQQIQRQILIAEFQRQHEQLSRQHEAQLHEHIKQQEMLAMKHQQELLEHQRKLEQHRQEQELEKQHREQKLQQLKNKEKGKESAVASTEVKMKLQEFVLNKKKALAHRNLNHCISSDPRFWYGKTQHSSLDQSSPPQSGVSGTYNHPVLGMYDSKDDFPLRKTASEPNLKLRSRLKQKVAERRSSPLLRRKDGPVVTALKKRPLDVTDSACNSAPGSGPSSPNNSSNNISAENGITGSVTSIQAETSLAHRLVNREGSVTQLPLYTSPSLPNITLGLPATGPSSGGSAQQDAERLAIPALQQRISLFPGTHLTPYLSTTTLERDGGTAHNPLLQHMVLLEQPTAQTPLVTGLPLHAQSLVGGERVSPSIHKLRQHRPLGRTQSAPLPQNAQALQQLVIQQQHQQFLEKHKQQFQQQQLHINKIISKPNEPARQHESHPEETEEELREHQALLEEPYSDRVSSQKEVPGLANMVQVKQEPIESDEEEAEPQQELESGQRQAEQELLFRQQALLLEQQRIHQLRNYQASLEAAGMPVSFGGHRPLSRAQSSPASATFPMSVQEPPTKPRFTTGLVYDTLMLKHQCTCGNTNSHPEHAGRIQSIWSRLQETGLRGKCECIRGRKATLEELQTVHSEAHTLLYGTNPLNRQKLDSKKLLGSLTSMFVRLPCGGVGVDSDTIWNEVHSSGAARLAVGCVIELVFKVATGELKNGFAVVRPPGHHAEESTPMGFCYFNSVAIAAKLLQQRLNVSKILIVDWDVHHGNGTQQAFYNDPNVLYISLHRYDDGNFFPGSGAPDEVGTGAGVGFNVNMAFTGGLDPPMGDTEYLTAFRTVVMPIANEFAPDVVLVSSGFDAVEGHPTPLGGYNLSAKCFGYLTKQLMGLAGGRVVLALEGGHDLTAICDASEACVSALLGNELDPLPEKVLQQRANANAVHSMEKVIEIHSKYWHSLQRYASTVGYSLVEAQKCENEEAETVTAMASLSVGVKPAEKRPDDEPMEEEPPL.

Disordered stretches follow at residues 1–25 (MSSQSHPDGLSGRDQPVELLNPPRV), 132–165 (KLEQHRQEQELEKQHREQKLQQLKNKEKGKESAV), and 205–312 (TQHS…ISAE). Over residues 132–162 (KLEQHRQEQELEKQHREQKLQQLKNKEKGKE) the composition is skewed to basic and acidic residues. Polar residues predominate over residues 205-224 (TQHSSLDQSSPPQSGVSGTY). 2 stretches are compositionally biased toward basic and acidic residues: residues 233–244 (DSKDDFPLRKTA) and 258–273 (KVAERRSSPLLRRKDG). Residues 289–312 (SACNSAPGSGPSSPNNSSNNISAE) show a composition bias toward low complexity. The short motif at 348–353 (PSLPNI) is the PxLPxI/L element. Disordered regions lie at residues 506–527 (KPNEPARQHESHPEETEEELRE), 558–579 (EPIESDEEEAEPQQELESGQRQ), and 622–646 (PLSRAQSSPASATFPMSVQEPPTKP). A compositionally biased stretch (basic and acidic residues) spans 509-527 (EPARQHESHPEETEEELRE). Residues 560–571 (IESDEEEAEPQQ) are compositionally biased toward acidic residues. Over residues 625 to 637 (RAQSSPASATFPM) the composition is skewed to polar residues. Residues 651–1080 (GLVYDTLMLK…DEPMEEEPPL (430 aa)) form a histone deacetylase region. 4 residues coordinate Zn(2+): C663, C665, H671, and C747. H799 is an active-site residue. Residues 1055–1080 (MASLSVGVKPAEKRPDDEPMEEEPPL) form a disordered region.

Belongs to the histone deacetylase family. HD type 2 subfamily.

It localises to the nucleus. It carries out the reaction N(6)-acetyl-L-lysyl-[histone] + H2O = L-lysyl-[histone] + acetate. In terms of biological role, responsible for the deacetylation of lysine residues on the N-terminal part of the core histones (H2A, H2B, H3 and H4). Histone deacetylation gives a tag for epigenetic repression and plays an important role in transcriptional regulation, cell cycle progression and developmental events. Histone deacetylases act via the formation of large multiprotein complexes. This is Histone deacetylase 4 (HDAC4) from Gallus gallus (Chicken).